Consider the following 421-residue polypeptide: MHDAVTRPTPPSDATSWPRRQTHAVQIGGVTVGGGKPVVVQSMTNTDTSDVASSVKQVAELWRAGSEMVRLTVNTVEAAAAIPRIVDKLAMMGIDVPLIGDFHYNGHQLLTAEPACAEALAKYRINPGNVGFGKKKDLQFAQLIEFAIRYNKPVRIGANWGSLDQALAAKLMDENNHREQPWDAGRVLREALIRSALDSAEQAVEIGLPRDRIVLSAKVSGVQELIAVYRDLAQRSDFALHLGLTEAGIGSKGIVASSAALSVLLQEGIGDTIRISLTPEPGQSRTQEVIVAQELLQTTGQRAFTPLVTACPGCGRTTSEFFQELAKVVQSHVREKMPMWKIQHPGAENMTLAVMGCIVNGPGESRHANIGISLPGTGETPAAPVFVDGEKKVTLRGENIAQDFVALIDDYVERTYVRNAG.

The tract at residues 1-20 is disordered; that stretch reads MHDAVTRPTPPSDATSWPRR. Residues C311, C314, C357, and E364 each coordinate [4Fe-4S] cluster.

The protein belongs to the IspG family. The cofactor is [4Fe-4S] cluster.

The enzyme catalyses (2E)-4-hydroxy-3-methylbut-2-enyl diphosphate + oxidized [flavodoxin] + H2O + 2 H(+) = 2-C-methyl-D-erythritol 2,4-cyclic diphosphate + reduced [flavodoxin]. It participates in isoprenoid biosynthesis; isopentenyl diphosphate biosynthesis via DXP pathway; isopentenyl diphosphate from 1-deoxy-D-xylulose 5-phosphate: step 5/6. Its function is as follows. Converts 2C-methyl-D-erythritol 2,4-cyclodiphosphate (ME-2,4cPP) into 1-hydroxy-2-methyl-2-(E)-butenyl 4-diphosphate. In Stenotrophomonas maltophilia (strain R551-3), this protein is 4-hydroxy-3-methylbut-2-en-1-yl diphosphate synthase (flavodoxin).